We begin with the raw amino-acid sequence, 303 residues long: Caspase-7 (303 aa).

The disordered stretch occupies residues 1–27 (MADDQNCAPELEKADPSGEDGVDAKPD). Ala2 carries the N-acetylalanine modification. Positions 2 to 23 (ADDQNCAPELEKADPSGEDGVD) are cleaved as a propeptide — N-terminally processed. Positions 10–27 (ELEKADPSGEDGVDAKPD) are enriched in basic and acidic residues. Ser30 is modified (phosphoserine). The interval 38-41 (KKKK) is exosite. The tract at residues 76-87 (KNFDKVTGMDVR) is loop L1. The active site involves His144. Thr173 bears the Phosphothreonine mark. Cys186 is a catalytic residue. The loop L2 stretch occupies residues 187–196 (RGTELDDGVQ). Positions 199–206 (SGPINETD) are excised as a propeptide. Residues 226-238 (VPGYYSWRNPGKG) form a loop L3 region. Residue Ser239 is modified to Phosphoserine. Residues 274–288 (ESQCDDPCFNEKKQI) are loop L4.

The protein belongs to the peptidase C14A family. As to quaternary structure, heterotetramer that consists of two anti-parallel arranged heterodimers, each one formed by a 20 kDa (p20) and a 11 kDa (p11) subunit. Interacts with XIAP (via its second BIR domain); inhibiting CASP7 activity. Interacts with BIRC6/bruce. Interacts with ATXN3 (short isoform 1). Interacts with HSPA5. Post-translationally, cleavage by different proteases, such as granzyme B (GZMB), caspase-1 (CASP1), caspase-8 (CASP8) or caspase-9 (CASP9) generate the two active subunits. Its involvement in different programmed cell death processes is probably specified by the protease that activates CASP7. Cleaved and activated by initiator caspases (CASP8 and/or CASP9), leading to execution phase of apoptosis. Cleavage and maturation by GZMB regulates granzyme-mediated programmed cell death. Cleaved and activated by CASP1 in response to bacterial infection. Propeptide domains can also be cleaved efficiently by CASP3. Active heterodimers between the small subunit of caspase-7 and the large subunit of CASP3, and vice versa, also occur. Also cleaved at the N-terminus at alternative sites by CAPN1, leading to its activation. In terms of processing, phosphorylation at Ser-30 and Ser-239 by PAK2 inhibits its activity. Phosphorylation at Ser-30 prevents cleavage and activation by initiator caspase CASP9, while phosphorylation at Ser-239 prevents thiol protease activity by preventing substrate-binding. Ubiquitinated by BIRC6; this activity is inhibited by DIABLO/SMAC.

The protein resides in the cytoplasm. It is found in the cytosol. The protein localises to the nucleus. It localises to the secreted. Its subcellular location is the extracellular space. The catalysed reaction is Strict requirement for an Asp residue at position P1 and has a preferred cleavage sequence of Asp-Glu-Val-Asp-|-.. During activation, the N-terminal disordered prodomain is removed by cleavage. Concomitantly, double cleavage gives rise to a large Caspase-7 subunit p20 and a small Caspase-7 subunit p11. The two large and two small subunits then assemble to form the active CASP7 complex. Can be cleaved and activated by different caspases, depending on the context. Cleaved and activated by initiator caspases (CASP8 and/or CASP9), leading to execution phase of apoptosis. Cleavage and maturation by GZMB regulates granzyme-mediated programmed cell death. Cleavage and maturation by CASP1 regulates pyroptosis. Inhibited by XIAP, which directly binds to the active site pocket and obstructs substrate entry. Phosphorylation at Ser-30 and Ser-239 by PAK2 inhibits its activity. Inhibited by BIRC6; following inhibition of BIRC6-caspase binding by DIABLO/SMAC, BIRC6 is subjected to caspase cleavage, leading to an increase in active caspases. Its function is as follows. Thiol protease involved in different programmed cell death processes, such as apoptosis, pyroptosis or granzyme-mediated programmed cell death, by proteolytically cleaving target proteins. Has a marked preference for Asp-Glu-Val-Asp (DEVD) consensus sequences, with some plasticity for alternate non-canonical sequences. Its involvement in the different programmed cell death processes is probably determined by upstream proteases that activate CASP7. Acts as an effector caspase involved in the execution phase of apoptosis: following cleavage and activation by initiator caspases (CASP8 and/or CASP9), mediates execution of apoptosis by catalyzing cleavage of proteins, such as CLSPN, PARP1, PTGES3 and YY1. Compared to CASP3, acts as a minor executioner caspase and cleaves a limited set of target proteins. Acts as a key regulator of the inflammatory response in response to bacterial infection by catalyzing cleavage and activation of the sphingomyelin phosphodiesterase SMPD1 in the extracellular milieu, thereby promoting membrane repair. Regulates pyroptosis in intestinal epithelial cells: cleaved and activated by CASP1 in response to S.typhimurium infection, promoting its secretion to the extracellular milieu, where it catalyzes activation of SMPD1, generating ceramides that repair membranes and counteract the action of gasdermin-D (GSDMD) pores. Regulates granzyme-mediated programmed cell death in hepatocytes: cleaved and activated by granzyme B (GZMB) in response to bacterial infection, promoting its secretion to the extracellular milieu, where it catalyzes activation of SMPD1, generating ceramides that repair membranes and counteract the action of perforin (PRF1) pores. Following cleavage by CASP1 in response to inflammasome activation, catalyzes processing and inactivation of PARP1, alleviating the transcription repressor activity of PARP1. Acts as an inhibitor of type I interferon production during virus-induced apoptosis by mediating cleavage of antiviral proteins CGAS, IRF3 and MAVS, thereby preventing cytokine overproduction. Cleaves and activates sterol regulatory element binding proteins (SREBPs). Cleaves phospholipid scramblase proteins XKR4, XKR8 and XKR9. Cleaves BIRC6 following inhibition of BIRC6-caspase binding by DIABLO/SMAC. This Mesocricetus auratus (Golden hamster) protein is Caspase-7 (CASP7).